Here is a 967-residue protein sequence, read N- to C-terminus: Regulator of G-protein signaling 3 (967 aa).

Residues 18–95 (QITIRRGKDG…EIILLVWRVV (78 aa)) form the PDZ domain. The interval 115–135 (THDLLSPPNKREKNCTHGAPT) is disordered. At Arg167 the chain carries Omega-N-methylarginine. The interval 389–705 (QLAATPTERK…EGGLSLRVQN (317 aa)) is disordered. Composition is skewed to polar residues over residues 476–486 (LPSSKNPSPSQ), 512–549 (SPSS…TEVP), and 577–597 (SSAS…QGSL). Acidic residues predominate over residues 650 to 676 (GEDEDAEEGEEGEEGEEDEEDDTNDDN). A compositionally biased stretch (basic and acidic residues) spans 677–687 (YGDRNEAKRSS). Phosphoserine is present on residues Ser713, Ser716, Ser748, and Ser777. Residues 807-830 (FRRRNESPGAQPAGKADKTTKSFK) are disordered. Over residues 821–830 (KADKTTKSFK) the composition is skewed to basic and acidic residues. The RGS domain occupies 842-967 (SLEKLLLHKY…INQKKMSPPL (126 aa)).

In terms of assembly, binds EFNB1 and EFNB2. Binds the GNB1-GNG2 heterodimer. Binds ESR1. Post-translationally, phosphorylated by cyclic GMP-dependent protein kinase. ISGylated. Detected in kidney, uterus, ovary, heart, brain, spleen, lung and testis.

The protein resides in the cytoplasm. Its subcellular location is the membrane. It is found in the nucleus. In terms of biological role, down-regulates signaling from heterotrimeric G-proteins by increasing the GTPase activity of the alpha subunits, thereby driving them into their inactive GDP-bound form. Down-regulates G-protein-mediated release of inositol phosphates and activation of MAP kinases. In Rattus norvegicus (Rat), this protein is Regulator of G-protein signaling 3 (Rgs3).